Consider the following 302-residue polypeptide: Nudix hydrolase 5 (302 aa).

The Nudix hydrolase domain occupies Ser122–Ala254. The short motif at Gly159–Asp180 is the Nudix box element. Residues Glu174 and Glu178 each coordinate Mg(2+).

It belongs to the Nudix hydrolase family. The cofactor is Mg(2+). Requires Mn(2+) as cofactor. Expressed in roots, stems and leaves.

Functionally, probably mediates the hydrolysis of some nucleoside diphosphate derivatives. The chain is Nudix hydrolase 5 (NUDT5) from Arabidopsis thaliana (Mouse-ear cress).